The chain runs to 443 residues: Probable 26S proteasome regulatory subunit 4 (443 aa).

The interval 1–53 is disordered; that stretch reads MGQQQSGFGGRGNDRGAGDGEKKEKKKYEAPIPSRIGKKKKGSKGPDAASKLP. Residues 12-29 are compositionally biased toward basic and acidic residues; sequence GNDRGAGDGEKKEKKKYE. 229–236 is an ATP binding site; sequence GCPGTGKT.

This sequence belongs to the AAA ATPase family.

Its subcellular location is the cytoplasm. The protein localises to the nucleus. Functionally, the 26S proteasome is involved in the ATP-dependent degradation of ubiquitinated proteins. The regulatory (or ATPase) complex confers ATP dependency and substrate specificity to the 26S complex. May play a role in the degradation of microtubule severing protein mei-1. This is Probable 26S proteasome regulatory subunit 4 (rpt-2) from Caenorhabditis elegans.